The chain runs to 88 residues: UPF0297 protein BLi02868/BL02032 (88 aa).

This sequence belongs to the UPF0297 family.

The polypeptide is UPF0297 protein BLi02868/BL02032 (Bacillus licheniformis (strain ATCC 14580 / DSM 13 / JCM 2505 / CCUG 7422 / NBRC 12200 / NCIMB 9375 / NCTC 10341 / NRRL NRS-1264 / Gibson 46)).